Reading from the N-terminus, the 1354-residue chain is Eukaryotic translation initiation factor 3 subunit A (1354 aa).

K68 is subject to N6-acetyllysine. Residues 82–120 (NIKSLEDVVRAYLKLAEEKTEAAKEESQQMVLDIEDLDN) adopt a coiled-coil conformation. Residues 315–498 (MQRMSTRVLL…RTLSFGSDLN (184 aa)) enclose the PCI domain. Phosphoserine is present on residues S492 and S584. Positions 664 to 835 (LDPDFIMAKQ…REERERAERA (172 aa)) are interaction with EIF3B. 3 disordered regions span residues 809-844 (EKEE…LREY), 866-1249 (EERE…RDRD), and 1262-1354 (DLRD…TVRR). Basic and acidic residues-rich tracts occupy residues 866–1136 (EERE…DDAR), 1148–1249 (GWRE…RDRD), 1262–1302 (DLRD…DPPR), and 1310–1343 (SRER…TKNE). The residue at position 895 (S895) is a Phosphoserine. The 1; truncated repeat unit spans residues 924–931 (DDERPHRR). Residues 924–1143 (DDERPHRRDE…DARPGPWRPF (220 aa)) form a 22 X 10 AA approximate tandem repeats of [DA]-[DE]-[ED]-R-[PLIGFSV]-[RPS]-[RW]-[RL]-[GNIHT]-[DGLPTAM] region. Residues 932 to 941 (DEDRLRRLGG) form repeat 2. Residues 942–951 (DDEERESSLR) form a 3; approximate repeat. Phosphoserine is present on S949. 18 tandem repeats follow at residues 953–962 (DDDRIPRRGL), 963–972 (DDDRGPRRGP), 973–982 (DEDRFSRRGT), 983–992 (DDDRPSWRNA), 993–1002 (DDDRPPRRIG), 1003–1012 (DDDRGSWRHT), 1013–1022 (DDDRPPRRGL), 1023–1032 (DDDRPPRRGL), 1033–1042 (DDERGSWRTA), 1043–1052 (EEDRGPRRGM), 1053–1062 (DDDRGPRRGG), 1064–1073 (DDERSSWRNA), 1074–1083 (DDDRGPRRGM), 1084–1093 (DDDRGPRRGL), 1094–1103 (DDDRGPWRNA), 1104–1113 (AEDRISRRGA), 1114–1123 (DDDRGPWRNM), and 1124–1133 (DDDRVPRRGD). A Phosphoserine modification is found at S1038. One copy of the 22; approximate repeat lies at 1134 to 1143 (DARPGPWRPF). Residues S1159 and S1233 each carry the phosphoserine modification. A phosphoserine mark is found at S1310 and S1336.

This sequence belongs to the eIF-3 subunit A family. In terms of assembly, component of the eukaryotic translation initiation factor 3 (eIF-3) complex, which is composed of 13 subunits: EIF3A, EIF3B, EIF3C, EIF3D, EIF3E, EIF3F, EIF3G, EIF3H, EIF3I, EIF3J, EIF3K, EIF3L and EIF3M. The eIF-3 complex appears to include 3 stable modules: module A is composed of EIF3A, EIF3B, EIF3G and EIF3I; module B is composed of EIF3F, EIF3H, and EIF3M; and module C is composed of EIF3C, EIF3D, EIF3E, EIF3L and EIF3K. EIF3C of module C binds EIF3B of module A and EIF3H of module B, thereby linking the three modules. EIF3J is a labile subunit that binds to the eIF-3 complex via EIF3B. The eIF-3 complex interacts with RPS6KB1 under conditions of nutrient depletion. Mitogenic stimulation leads to binding and activation of a complex composed of MTOR and RPTOR, leading to phosphorylation and release of RPS6KB1 and binding of EIF4B to eIF-3. Interacts with EIF4G1. Also interacts with KRT7 and PIWIL2. Post-translationally, phosphorylated. Phosphorylation is enhanced upon serum stimulation.

It is found in the cytoplasm. In terms of biological role, RNA-binding component of the eukaryotic translation initiation factor 3 (eIF-3) complex, which is required for several steps in the initiation of protein synthesis. The eIF-3 complex associates with the 40S ribosome and facilitates the recruitment of eIF-1, eIF-1A, eIF-2:GTP:methionyl-tRNAi and eIF-5 to form the 43S pre-initiation complex (43S PIC). The eIF-3 complex stimulates mRNA recruitment to the 43S PIC and scanning of the mRNA for AUG recognition. The eIF-3 complex is also required for disassembly and recycling of post-termination ribosomal complexes and subsequently prevents premature joining of the 40S and 60S ribosomal subunits prior to initiation. The eIF-3 complex specifically targets and initiates translation of a subset of mRNAs involved in cell proliferation, including cell cycling, differentiation and apoptosis, and uses different modes of RNA stem-loop binding to exert either translational activation or repression. The polypeptide is Eukaryotic translation initiation factor 3 subunit A (Eif3a) (Rattus norvegicus (Rat)).